The sequence spans 303 residues: 2-(5''-triphosphoribosyl)-3'-dephosphocoenzyme-A synthase (303 aa).

This sequence belongs to the CitG/MdcB family.

It catalyses the reaction 3'-dephospho-CoA + ATP = 2'-(5''-triphospho-alpha-D-ribosyl)-3'-dephospho-CoA + adenine. Functionally, catalyzes the formation of 2-(5''-triphosphoribosyl)-3'-dephosphocoenzyme-A, the precursor of the prosthetic group of the holo-acyl carrier protein (gamma chain) of citrate lyase, from ATP and dephospho-CoA. The protein is 2-(5''-triphosphoribosyl)-3'-dephosphocoenzyme-A synthase of Escherichia fergusonii (strain ATCC 35469 / DSM 13698 / CCUG 18766 / IAM 14443 / JCM 21226 / LMG 7866 / NBRC 102419 / NCTC 12128 / CDC 0568-73).